A 390-amino-acid chain; its full sequence is Lipid-A-disaccharide synthase (390 aa).

The protein belongs to the LpxB family.

It catalyses the reaction a lipid X + a UDP-2-N,3-O-bis[(3R)-3-hydroxyacyl]-alpha-D-glucosamine = a lipid A disaccharide + UDP + H(+). Its pathway is bacterial outer membrane biogenesis; LPS lipid A biosynthesis. Functionally, condensation of UDP-2,3-diacylglucosamine and 2,3-diacylglucosamine-1-phosphate to form lipid A disaccharide, a precursor of lipid A, a phosphorylated glycolipid that anchors the lipopolysaccharide to the outer membrane of the cell. The polypeptide is Lipid-A-disaccharide synthase (Haemophilus influenzae (strain PittEE)).